The chain runs to 277 residues: Phosphatidylserine decarboxylase proenzyme (277 aa).

Residues Asp88, His144, and Ser242 each act as charge relay system; for autoendoproteolytic cleavage activity in the active site. Ser242 functions as the Schiff-base intermediate with substrate; via pyruvic acid; for decarboxylase activity in the catalytic mechanism. A Pyruvic acid (Ser); by autocatalysis modification is found at Ser242.

This sequence belongs to the phosphatidylserine decarboxylase family. PSD-B subfamily. Prokaryotic type I sub-subfamily. In terms of assembly, heterodimer of a large membrane-associated beta subunit and a small pyruvoyl-containing alpha subunit. Pyruvate serves as cofactor. Is synthesized initially as an inactive proenzyme. Formation of the active enzyme involves a self-maturation process in which the active site pyruvoyl group is generated from an internal serine residue via an autocatalytic post-translational modification. Two non-identical subunits are generated from the proenzyme in this reaction, and the pyruvate is formed at the N-terminus of the alpha chain, which is derived from the carboxyl end of the proenzyme. The autoendoproteolytic cleavage occurs by a canonical serine protease mechanism, in which the side chain hydroxyl group of the serine supplies its oxygen atom to form the C-terminus of the beta chain, while the remainder of the serine residue undergoes an oxidative deamination to produce ammonia and the pyruvoyl prosthetic group on the alpha chain. During this reaction, the Ser that is part of the protease active site of the proenzyme becomes the pyruvoyl prosthetic group, which constitutes an essential element of the active site of the mature decarboxylase.

The protein resides in the cell membrane. The catalysed reaction is a 1,2-diacyl-sn-glycero-3-phospho-L-serine + H(+) = a 1,2-diacyl-sn-glycero-3-phosphoethanolamine + CO2. It functions in the pathway phospholipid metabolism; phosphatidylethanolamine biosynthesis; phosphatidylethanolamine from CDP-diacylglycerol: step 2/2. Functionally, catalyzes the formation of phosphatidylethanolamine (PtdEtn) from phosphatidylserine (PtdSer). This Psychrobacter arcticus (strain DSM 17307 / VKM B-2377 / 273-4) protein is Phosphatidylserine decarboxylase proenzyme.